We begin with the raw amino-acid sequence, 677 residues long: Methionine--tRNA ligase (677 aa).

Positions 15-25 match the 'HIGH' region motif; the sequence is PYANGSIHLGH. Positions 146, 149, 159, and 162 each coordinate Zn(2+). The short motif at 333–337 is the 'KMSKS' region element; that stretch reads KMSKS. Lysine 336 contributes to the ATP binding site. A tRNA-binding domain is found at 575-677; it reads DFAKVDLRVA…DGAKPGQQVK (103 aa).

Belongs to the class-I aminoacyl-tRNA synthetase family. MetG type 1 subfamily. Homodimer. It depends on Zn(2+) as a cofactor.

It localises to the cytoplasm. It catalyses the reaction tRNA(Met) + L-methionine + ATP = L-methionyl-tRNA(Met) + AMP + diphosphate. In terms of biological role, is required not only for elongation of protein synthesis but also for the initiation of all mRNA translation through initiator tRNA(fMet) aminoacylation. The protein is Methionine--tRNA ligase of Klebsiella pneumoniae subsp. pneumoniae (strain ATCC 700721 / MGH 78578).